Here is a 500-residue protein sequence, read N- to C-terminus: NAD(P)H-quinone oxidoreductase chain 4, chloroplastic (500 aa).

Helical transmembrane passes span 4-24, 37-57, 87-107, 113-130, 134-154, 167-187, 211-231, 242-262, 272-292, 305-325, 330-350, 386-406, 416-436, and 462-482; these read FPWL…IFFL, ICIC…HFQL, IGPI…AWPV, LFHF…GLFS, LLLF…LLSM, FILY…GMGL, ILFY…IPLH, HYST…YGLV, AHSI…IYAA, IAYS…SITD, GAIL…FLAG, LALP…GIIT, ILIT…LLSM, and LFVS…PDFV.

The protein belongs to the complex I subunit 4 family.

The protein localises to the plastid. Its subcellular location is the chloroplast thylakoid membrane. It carries out the reaction a plastoquinone + NADH + (n+1) H(+)(in) = a plastoquinol + NAD(+) + n H(+)(out). The enzyme catalyses a plastoquinone + NADPH + (n+1) H(+)(in) = a plastoquinol + NADP(+) + n H(+)(out). In Acorus calamus var. americanus (American sweet flag), this protein is NAD(P)H-quinone oxidoreductase chain 4, chloroplastic.